The primary structure comprises 326 residues: Vitamin B12 import system permease protein BtuC (326 aa).

A run of 9 helical transmembrane segments spans residues 15 to 35 (WLLC…CAGE), 61 to 81 (LAVL…QALF), 88 to 108 (PGLL…VLLG), 112 to 132 (LPNW…TLIL), 146 to 166 (LLAG…AIYF), 184 to 204 (GGVD…LLWI), 240 to 260 (GWMV…GLVI), 274 to 294 (VLLP…DVVA), and 302 to 322 (ELPI…WLLL).

This sequence belongs to the binding-protein-dependent transport system permease family. FecCD subfamily. As to quaternary structure, the complex is composed of two ATP-binding proteins (BtuD), two transmembrane proteins (BtuC) and a solute-binding protein (BtuF).

The protein resides in the cell inner membrane. Part of the ABC transporter complex BtuCDF involved in vitamin B12 import. Involved in the translocation of the substrate across the membrane. The protein is Vitamin B12 import system permease protein BtuC of Escherichia coli O8 (strain IAI1).